The sequence spans 224 residues: Peptidyl-prolyl cis-trans isomerase CYP21-1 (224 aa).

The signal sequence occupies residues Met-1–Ala-27. The PPIase cyclophilin-type domain maps to Phe-50–Glu-214. The N-linked (GlcNAc...) asparagine glycan is linked to Asn-158.

This sequence belongs to the cyclophilin-type PPIase family. As to expression, ubiquitous.

Its subcellular location is the endoplasmic reticulum. It carries out the reaction [protein]-peptidylproline (omega=180) = [protein]-peptidylproline (omega=0). PPIases accelerate the folding of proteins. It catalyzes the cis-trans isomerization of proline imidic peptide bonds in oligopeptides. This Arabidopsis thaliana (Mouse-ear cress) protein is Peptidyl-prolyl cis-trans isomerase CYP21-1 (CYP21-1).